Reading from the N-terminus, the 191-residue chain is MKDEHNQEHDHLSQKEPESYQKACACKEQQGEEKQEASEKECEIKEDFELKYKEMHEKYLRVHADFENVKKRLERDKSMALEYAYEKIALDLLPVIDALLGAYKSAAEENKESALTKGLELTMEKLHEVLARHGIEGIECLEEFDPNFHNAIMQVKSEEKENGKIVQVLQQGYKYKGRVLRPAMVSIAKND.

Composition is skewed to basic and acidic residues over residues 1-19 (MKDEHNQEHDHLSQKEPES) and 29-42 (QQGEEKQEASEKEC). Residues 1-42 (MKDEHNQEHDHLSQKEPESYQKACACKEQQGEEKQEASEKEC) form a disordered region.

The protein belongs to the GrpE family. In terms of assembly, homodimer.

The protein localises to the cytoplasm. Functionally, participates actively in the response to hyperosmotic and heat shock by preventing the aggregation of stress-denatured proteins, in association with DnaK and GrpE. It is the nucleotide exchange factor for DnaK and may function as a thermosensor. Unfolded proteins bind initially to DnaJ; upon interaction with the DnaJ-bound protein, DnaK hydrolyzes its bound ATP, resulting in the formation of a stable complex. GrpE releases ADP from DnaK; ATP binding to DnaK triggers the release of the substrate protein, thus completing the reaction cycle. Several rounds of ATP-dependent interactions between DnaJ, DnaK and GrpE are required for fully efficient folding. This chain is Protein GrpE, found in Helicobacter pylori (strain HPAG1).